We begin with the raw amino-acid sequence, 427 residues long: Enolase (427 aa).

Glutamine 162 is a binding site for (2R)-2-phosphoglycerate. Glutamate 204 acts as the Proton donor in catalysis. Residues aspartate 241, glutamate 284, and aspartate 311 each coordinate Mg(2+). (2R)-2-phosphoglycerate-binding residues include lysine 336, arginine 365, serine 366, and lysine 387. Lysine 336 functions as the Proton acceptor in the catalytic mechanism.

It belongs to the enolase family. The cofactor is Mg(2+).

The protein localises to the cytoplasm. Its subcellular location is the secreted. It localises to the cell surface. The enzyme catalyses (2R)-2-phosphoglycerate = phosphoenolpyruvate + H2O. The protein operates within carbohydrate degradation; glycolysis; pyruvate from D-glyceraldehyde 3-phosphate: step 4/5. Catalyzes the reversible conversion of 2-phosphoglycerate (2-PG) into phosphoenolpyruvate (PEP). It is essential for the degradation of carbohydrates via glycolysis. This is Enolase from Corynebacterium kroppenstedtii (strain DSM 44385 / JCM 11950 / CIP 105744 / CCUG 35717).